A 237-amino-acid chain; its full sequence is Demethylmenaquinone methyltransferase (237 aa).

S-adenosyl-L-methionine is bound by residues T58, D79, and 106-107 (NA).

This sequence belongs to the class I-like SAM-binding methyltransferase superfamily. MenG/UbiE family.

It carries out the reaction a 2-demethylmenaquinol + S-adenosyl-L-methionine = a menaquinol + S-adenosyl-L-homocysteine + H(+). It participates in quinol/quinone metabolism; menaquinone biosynthesis; menaquinol from 1,4-dihydroxy-2-naphthoate: step 2/2. In terms of biological role, methyltransferase required for the conversion of demethylmenaquinol (DMKH2) to menaquinol (MKH2). The chain is Demethylmenaquinone methyltransferase from Bacillus cytotoxicus (strain DSM 22905 / CIP 110041 / 391-98 / NVH 391-98).